The chain runs to 460 residues: Serine--tRNA ligase (460 aa).

The segment covering 50–65 has biased composition (basic and acidic residues); the sequence is DRNEVSSKIGELKQAG. Disordered regions lie at residues 50-71 and 109-129; these read DRNE…DAAQ and PDED…RREG. Over residues 109–121 the composition is skewed to acidic residues; that stretch reads PDEDAPVGDSEAE. 241–243 lines the L-serine pocket; that stretch reads TAE. Residues 272-274 and Val-288 each bind ATP; that span reads RRE. An L-serine-binding site is contributed by Glu-295. Position 368-371 (368-371) interacts with ATP; the sequence is EVSS. Ser-404 serves as a coordination point for L-serine.

It belongs to the class-II aminoacyl-tRNA synthetase family. Type-1 seryl-tRNA synthetase subfamily. Homodimer. The tRNA molecule binds across the dimer.

It is found in the cytoplasm. The catalysed reaction is tRNA(Ser) + L-serine + ATP = L-seryl-tRNA(Ser) + AMP + diphosphate + H(+). It catalyses the reaction tRNA(Sec) + L-serine + ATP = L-seryl-tRNA(Sec) + AMP + diphosphate + H(+). The protein operates within aminoacyl-tRNA biosynthesis; selenocysteinyl-tRNA(Sec) biosynthesis; L-seryl-tRNA(Sec) from L-serine and tRNA(Sec): step 1/1. Functionally, catalyzes the attachment of serine to tRNA(Ser). Is also able to aminoacylate tRNA(Sec) with serine, to form the misacylated tRNA L-seryl-tRNA(Sec), which will be further converted into selenocysteinyl-tRNA(Sec). The protein is Serine--tRNA ligase of Halobacterium salinarum (strain ATCC 29341 / DSM 671 / R1).